Reading from the N-terminus, the 401-residue chain is Dual-specificity RNA methyltransferase RlmN (401 aa).

The Proton acceptor role is filled by Glu114. The 246-residue stretch at 120-365 folds into the Radical SAM core domain; sequence DKGRGTLCVS…TMVRRTRGDD (246 aa). An intrachain disulfide couples Cys127 to Cys370. [4Fe-4S] cluster contacts are provided by Cys134, Cys138, and Cys141. Residues 187–188, Ser219, 241–243, and Asn327 contribute to the S-adenosyl-L-methionine site; these read GE and SLH. Residue Cys370 is the S-methylcysteine intermediate of the active site.

Belongs to the radical SAM superfamily. RlmN family. Requires [4Fe-4S] cluster as cofactor.

Its subcellular location is the cytoplasm. It carries out the reaction adenosine(2503) in 23S rRNA + 2 reduced [2Fe-2S]-[ferredoxin] + 2 S-adenosyl-L-methionine = 2-methyladenosine(2503) in 23S rRNA + 5'-deoxyadenosine + L-methionine + 2 oxidized [2Fe-2S]-[ferredoxin] + S-adenosyl-L-homocysteine. The catalysed reaction is adenosine(37) in tRNA + 2 reduced [2Fe-2S]-[ferredoxin] + 2 S-adenosyl-L-methionine = 2-methyladenosine(37) in tRNA + 5'-deoxyadenosine + L-methionine + 2 oxidized [2Fe-2S]-[ferredoxin] + S-adenosyl-L-homocysteine. Its function is as follows. Specifically methylates position 2 of adenine 2503 in 23S rRNA and position 2 of adenine 37 in tRNAs. m2A2503 modification seems to play a crucial role in the proofreading step occurring at the peptidyl transferase center and thus would serve to optimize ribosomal fidelity. The protein is Dual-specificity RNA methyltransferase RlmN of Xanthomonas axonopodis pv. citri (strain 306).